Here is a 209-residue protein sequence, read N- to C-terminus: Molybdenum cofactor guanylyltransferase (209 aa).

GTP-binding positions include 16–18, Lys28, Asn56, Asp69, and Asp103; that span reads LAG. Asp103 is a binding site for Mg(2+).

Belongs to the MobA family. As to quaternary structure, monomer. Mg(2+) is required as a cofactor.

Its subcellular location is the cytoplasm. It catalyses the reaction Mo-molybdopterin + GTP + H(+) = Mo-molybdopterin guanine dinucleotide + diphosphate. In terms of biological role, transfers a GMP moiety from GTP to Mo-molybdopterin (Mo-MPT) cofactor (Moco or molybdenum cofactor) to form Mo-molybdopterin guanine dinucleotide (Mo-MGD) cofactor. The sequence is that of Molybdenum cofactor guanylyltransferase from Rhizobium johnstonii (strain DSM 114642 / LMG 32736 / 3841) (Rhizobium leguminosarum bv. viciae).